A 191-amino-acid chain; its full sequence is Pyridoxal 5'-phosphate synthase subunit PdxT (191 aa).

An L-glutamine-binding site is contributed by 48–50 (GES). Residue cysteine 81 is the Nucleophile of the active site. L-glutamine contacts are provided by residues arginine 109 and 136–137 (IR). Catalysis depends on charge relay system residues histidine 172 and glutamate 174.

This sequence belongs to the glutaminase PdxT/SNO family. In the presence of PdxS, forms a dodecamer of heterodimers. Only shows activity in the heterodimer.

The enzyme catalyses aldehydo-D-ribose 5-phosphate + D-glyceraldehyde 3-phosphate + L-glutamine = pyridoxal 5'-phosphate + L-glutamate + phosphate + 3 H2O + H(+). It catalyses the reaction L-glutamine + H2O = L-glutamate + NH4(+). Its pathway is cofactor biosynthesis; pyridoxal 5'-phosphate biosynthesis. Functionally, catalyzes the hydrolysis of glutamine to glutamate and ammonia as part of the biosynthesis of pyridoxal 5'-phosphate. The resulting ammonia molecule is channeled to the active site of PdxS. The protein is Pyridoxal 5'-phosphate synthase subunit PdxT of Thermus thermophilus (strain ATCC 27634 / DSM 579 / HB8).